The sequence spans 250 residues: Ribosomal RNA small subunit methyltransferase G (250 aa).

S-adenosyl-L-methionine is bound by residues Gly78, Leu83, Ala129–Glu130, and Arg144. A disordered region spans residues Ile224–Thr250. Over residues Pro227–Thr250 the composition is skewed to basic residues.

Belongs to the methyltransferase superfamily. RNA methyltransferase RsmG family.

The protein resides in the cytoplasm. In terms of biological role, specifically methylates the N7 position of guanine in position 518 of 16S rRNA. This chain is Ribosomal RNA small subunit methyltransferase G, found in Nocardioides sp. (strain ATCC BAA-499 / JS614).